The sequence spans 990 residues: Pro-apoptotic serine protease NMA111 (990 aa).

Residues 1-32 (MSVTNSNRKRSLSEVSEGSDPEAPAKTRNSYT) are disordered. Positions 73-263 (VVSIHFSQVA…LPLDRILRAL (191 aa)) are serine protease. Active-site charge relay system residues include His111, Asp142, and Ser225. PDZ domains follow at residues 290–368 (RRLG…QRGG) and 758–843 (SILT…VREG).

The protein belongs to the peptidase S1C family.

It localises to the nucleus. Functionally, nuclear serine protease which mediates apoptosis. In Vanderwaltozyma polyspora (strain ATCC 22028 / DSM 70294 / BCRC 21397 / CBS 2163 / NBRC 10782 / NRRL Y-8283 / UCD 57-17) (Kluyveromyces polysporus), this protein is Pro-apoptotic serine protease NMA111 (NMA111).